A 159-amino-acid polypeptide reads, in one-letter code: Transcription elongation factor GreA (159 aa).

A coiled-coil region spans residues 43-75 (LSENAEYDAAREEQSQLEAKIGEIENKLASATI).

This sequence belongs to the GreA/GreB family.

Functionally, necessary for efficient RNA polymerase transcription elongation past template-encoded arresting sites. The arresting sites in DNA have the property of trapping a certain fraction of elongating RNA polymerases that pass through, resulting in locked ternary complexes. Cleavage of the nascent transcript by cleavage factors such as GreA or GreB allows the resumption of elongation from the new 3'terminus. GreA releases sequences of 2 to 3 nucleotides. The sequence is that of Transcription elongation factor GreA from Chlorobaculum tepidum (strain ATCC 49652 / DSM 12025 / NBRC 103806 / TLS) (Chlorobium tepidum).